A 571-amino-acid polypeptide reads, in one-letter code: Potassium-transporting ATPase potassium-binding subunit (571 aa).

The next 11 membrane-spanning stretches (helical) occupy residues 5–25 (GWTQ…PLGW), 64–84 (LGYA…LYAI), 136–156 (GLTH…VALI), 178–198 (ILYV…WQGI), 254–274 (LSNF…TNVF), 285–305 (WAIL…AYWA), 330–350 (FDIA…CGAV), 357–379 (FTAL…IGGV), 421–441 (MLGI…ATVL), 488–508 (LAVG…AIAG), and 527–547 (GALF…LTFF).

It belongs to the KdpA family. The system is composed of three essential subunits: KdpA, KdpB and KdpC.

The protein resides in the cell inner membrane. Functionally, part of the high-affinity ATP-driven potassium transport (or Kdp) system, which catalyzes the hydrolysis of ATP coupled with the electrogenic transport of potassium into the cytoplasm. This subunit binds the periplasmic potassium ions and delivers the ions to the membrane domain of KdpB through an intramembrane tunnel. The polypeptide is Potassium-transporting ATPase potassium-binding subunit (Methylobacterium nodulans (strain LMG 21967 / CNCM I-2342 / ORS 2060)).